The following is a 360-amino-acid chain: Phospho-N-acetylmuramoyl-pentapeptide-transferase (360 aa).

10 helical membrane-spanning segments follow: residues 26 to 46 (AIVS…RMIA), 72 to 92 (PTMG…LWAY), 94 to 114 (SNPY…IGFV), 132 to 152 (WKYF…YLAG), 168 to 188 (VMPQ…VGTG), 199 to 219 (GLAI…AWAT), 236 to 256 (AGEL…FLWF), 263 to 283 (VFMG…IAVL), 288 to 308 (FLLV…ILQV), and 338 to 358 (VIVR…ATLK).

This sequence belongs to the glycosyltransferase 4 family. MraY subfamily. Mg(2+) serves as cofactor.

It is found in the cell inner membrane. The catalysed reaction is UDP-N-acetyl-alpha-D-muramoyl-L-alanyl-gamma-D-glutamyl-meso-2,6-diaminopimeloyl-D-alanyl-D-alanine + di-trans,octa-cis-undecaprenyl phosphate = di-trans,octa-cis-undecaprenyl diphospho-N-acetyl-alpha-D-muramoyl-L-alanyl-D-glutamyl-meso-2,6-diaminopimeloyl-D-alanyl-D-alanine + UMP. It participates in cell wall biogenesis; peptidoglycan biosynthesis. Catalyzes the initial step of the lipid cycle reactions in the biosynthesis of the cell wall peptidoglycan: transfers peptidoglycan precursor phospho-MurNAc-pentapeptide from UDP-MurNAc-pentapeptide onto the lipid carrier undecaprenyl phosphate, yielding undecaprenyl-pyrophosphoryl-MurNAc-pentapeptide, known as lipid I. The polypeptide is Phospho-N-acetylmuramoyl-pentapeptide-transferase (Klebsiella pneumoniae (strain 342)).